Consider the following 119-residue polypeptide: Large ribosomal subunit protein bL20 (119 aa).

This sequence belongs to the bacterial ribosomal protein bL20 family.

Functionally, binds directly to 23S ribosomal RNA and is necessary for the in vitro assembly process of the 50S ribosomal subunit. It is not involved in the protein synthesizing functions of that subunit. The chain is Large ribosomal subunit protein bL20 from Colwellia psychrerythraea (strain 34H / ATCC BAA-681) (Vibrio psychroerythus).